Here is a 176-residue protein sequence, read N- to C-terminus: ATP-dependent protease subunit HslV (176 aa).

The active site involves Thr5. Na(+)-binding residues include Gly161, Cys164, and Thr167.

Belongs to the peptidase T1B family. HslV subfamily. A double ring-shaped homohexamer of HslV is capped on each side by a ring-shaped HslU homohexamer. The assembly of the HslU/HslV complex is dependent on binding of ATP.

It localises to the cytoplasm. The enzyme catalyses ATP-dependent cleavage of peptide bonds with broad specificity.. Its activity is regulated as follows. Allosterically activated by HslU binding. Its function is as follows. Protease subunit of a proteasome-like degradation complex believed to be a general protein degrading machinery. This is ATP-dependent protease subunit HslV from Wolinella succinogenes (strain ATCC 29543 / DSM 1740 / CCUG 13145 / JCM 31913 / LMG 7466 / NCTC 11488 / FDC 602W) (Vibrio succinogenes).